The sequence spans 227 residues: Esterase OVCA2 (227 aa).

Active-site charge relay system residues include Ser119, Asp179, and His206.

It belongs to the LovG family.

It catalyses the reaction a carboxylic ester + H2O = an alcohol + a carboxylate + H(+). In terms of biological role, exhibits ester hydrolase activity with a strong preference for long-chain alkyl ester substrates and high selectivity against a variety of short, branched, and substituted esters. Is able to hydrolyze ester bonds within a wide range of p-nitrophenyl derivatives (C2-C14) in vitro, with a strong preference toward substrates of &gt;8 carbons. In Bos taurus (Bovine), this protein is Esterase OVCA2 (OVCA2).